The primary structure comprises 171 residues: NADH-quinone oxidoreductase subunit B 1 (171 aa).

Positions 44, 45, 110, and 139 each coordinate [4Fe-4S] cluster.

It belongs to the complex I 20 kDa subunit family. As to quaternary structure, NDH-1 is composed of 14 different subunits. Subunits NuoB, C, D, E, F, and G constitute the peripheral sector of the complex. [4Fe-4S] cluster serves as cofactor.

The protein localises to the cell inner membrane. The enzyme catalyses a quinone + NADH + 5 H(+)(in) = a quinol + NAD(+) + 4 H(+)(out). Functionally, NDH-1 shuttles electrons from NADH, via FMN and iron-sulfur (Fe-S) centers, to quinones in the respiratory chain. The immediate electron acceptor for the enzyme in this species is believed to be ubiquinone. Couples the redox reaction to proton translocation (for every two electrons transferred, four hydrogen ions are translocated across the cytoplasmic membrane), and thus conserves the redox energy in a proton gradient. This is NADH-quinone oxidoreductase subunit B 1 from Opitutus terrae (strain DSM 11246 / JCM 15787 / PB90-1).